The chain runs to 583 residues: Nuclear distribution protein nudE homolog 1 (583 aa).

Positions Ala-14–Arg-195 form a coiled coil. Disordered stretches follow at residues Leu-34–Thr-68, Thr-211–Ser-339, and His-358–Tyr-583. A compositionally biased stretch (basic and acidic residues) spans Ala-35–Glu-67. Composition is skewed to polar residues over residues Pro-219–Lys-235, Arg-279–Thr-319, Ser-329–Ser-339, Asn-379–Ile-392, and Ser-399–Lys-422. The span at Arg-453–Pro-469 shows a compositional bias: low complexity. The segment covering Arg-529–Gly-538 has biased composition (polar residues).

Belongs to the nudE family. In terms of assembly, self-associates. Interacts with PAC1.

The protein localises to the cytoplasm. The protein resides in the cytoskeleton. Required for nuclear migration. The sequence is that of Nuclear distribution protein nudE homolog 1 (NDE1) from Gibberella zeae (strain ATCC MYA-4620 / CBS 123657 / FGSC 9075 / NRRL 31084 / PH-1) (Wheat head blight fungus).